The sequence spans 160 residues: Cyclic pyranopterin monophosphate synthase (160 aa).

Residues 75–77 and 113–114 contribute to the substrate site; these read LCH and ME. The active site involves aspartate 128.

Belongs to the MoaC family. In terms of assembly, homohexamer; trimer of dimers.

It catalyses the reaction (8S)-3',8-cyclo-7,8-dihydroguanosine 5'-triphosphate = cyclic pyranopterin phosphate + diphosphate. It functions in the pathway cofactor biosynthesis; molybdopterin biosynthesis. In terms of biological role, catalyzes the conversion of (8S)-3',8-cyclo-7,8-dihydroguanosine 5'-triphosphate to cyclic pyranopterin monophosphate (cPMP). The sequence is that of Cyclic pyranopterin monophosphate synthase from Methylobacterium sp. (strain 4-46).